The chain runs to 532 residues: MGLPMMLQQYCWAACLVICIAISSVDDVGAEQNYGREAVEGNIRLIHGRTENEGSVEIYHATRWGGVCDWWWHMENANVTCKQLGFPGARQFYRRAYFGAHVTTFWVYKMNCLGNETRLEDCYHRPYGRPWLCNAQWAAGVECLPKDEPQGSLRMILGDVPNEGTLETFWDGAWGSVCHTDFGTPDGNVACRQMGYSRGVKSIKTDGHFGFSTGPIILDAVDCEGTEAHITECNMPVTPYQHACPYTHNWDVGVVCKPNVEGDIRLMDGSGPHEGRVEIWHDDAWGTICDDGWDWADANVVCRQAGYRGAVKASGFKGEDFGFTWAPIHTSFVMCTGVEDRLIDCILRDGWTHSCYHVEDASVVCATDDDDTIEIEPKHTRVRIVGMGQGQGRVEVSLGNGWGRVCDPDWSDHEAKTVCYHAGYKWGASRAAGSAEVSAPFDLEAPFIIDGITCSGVENETLSQCQMKVSADMTCATGDVGVVCEGSTAPPSGMSIAVIGGAAGGGVAGLAVAAFAFYYIKFVKPAGGGGQA.

Residues 1–30 form the signal peptide; that stretch reads MGLPMMLQQYCWAACLVICIAISSVDDVGA. Residues 31-491 are Extracellular-facing; the sequence is EQNYGREAVE…VVCEGSTAPP (461 aa). SRCR domains are found at residues 43–144, 153–257, 264–366, and 382–485; these read IRLI…VECL, LRMI…VVCK, IRLM…VVCA, and VRIV…VVCE. 12 disulfide bridges follow: Cys68-Cys133, Cys81-Cys143, Cys112-Cys122, Cys178-Cys244, Cys191-Cys256, Cys223-Cys233, Cys289-Cys355, Cys302-Cys365, Cys335-Cys345, Cys406-Cys475, Cys419-Cys484, and Cys454-Cys465. 2 N-linked (GlcNAc...) asparagine glycosylation sites follow: Asn78 and Asn115. N-linked (GlcNAc...) asparagine glycosylation is present at Asn459. Residues 492–520 form a helical membrane-spanning segment; the sequence is SGMSIAVIGGAAGGGVAGLAVAAFAFYYI. Topologically, residues 521-532 are cytoplasmic; sequence KFVKPAGGGGQA.

It localises to the membrane. In terms of biological role, receptor for the egg peptide speract. The chain is Egg peptide speract receptor from Strongylocentrotus purpuratus (Purple sea urchin).